Here is a 1239-residue protein sequence, read N- to C-terminus: Anion exchange protein 2 (1239 aa).

The disordered stretch occupies residues 1 to 237 (MSSAPRRPAK…HRSYNLQERR (237 aa)). The Cytoplasmic portion of the chain corresponds to 1–706 (MSSAPRRPAK…DFRDALDPQC (706 aa)). 2 stretches are compositionally biased toward basic and acidic residues: residues 37 to 49 (ELHR…RFEE) and 58 to 75 (GGEE…EYHR). Composition is skewed to basic residues over residues 76–85 (QSSHHIHHPL) and 94–110 (RRRK…RRRP). Ser-113, Ser-132, Ser-144, Ser-170, and Ser-172 each carry phosphoserine. Acidic residues predominate over residues 120–133 (TIEEGEEDEDEASE). Residues 141–155 (TQPSPVSTPSSVQFF) show a composition bias toward low complexity. Positions 189–207 (GAQAGTQVEEAEAVAVASG) are enriched in low complexity. Residues 208-217 (TAGGDDGGAS) are compositionally biased toward gly residues. Ser-241 carries the post-translational modification Phosphoserine. The residue at position 255 (Thr-255) is a Phosphothreonine. N6-methyllysine is present on Lys-272. The disordered stretch occupies residues 285-318 (HLVRKNAKGSTQSGREGREPGPTPRARPRAPHKP). Residue Ser-441 is modified to Phosphoserine. The tract at residues 447–468 (SLLGHHHGQGAESDPHVTEPLI) is disordered. Membrane (anion exchange) regions lie at residues 706-1239 (CLAA…PMPV) and 708-1239 (AAVI…PMPV). 4 helical membrane-spanning segments follow: residues 707 to 727 (LAAV…FGGL), 752 to 772 (FCLL…LLVF), 794 to 814 (IGFW…SFLV), and 824 to 844 (IFAF…LVKI). Topologically, residues 845–895 (FQEHPLHGCSASNSSEVDGGENMTWAVARPTLGPGNRSLAGQSGQGKPRGQ) are extracellular. N-linked (GlcNAc...) asparagine glycosylation is found at Asn-857, Asn-866, and Asn-880. A helical transmembrane segment spans residues 896–916 (PNTALLSLVLMAGTFFIAFFL). Residues 917–931 (RKFKNSRFFPGRIRR) are Cytoplasmic-facing. 5 consecutive transmembrane segments (helical) span residues 932-952 (VIGD…DYSI), 987-1007 (FPVW…ILIF), 1034-1054 (LLLI…WLAA), 1088-1108 (RVTG…GDLL), and 1111-1131 (IPLA…LNGI). Cys-1171 carries the S-palmitoyl cysteine lipid modification. Residues 1172 to 1192 (LALLWAVMSTAASLAFPFILI) traverse the membrane as a helical segment.

The protein belongs to the anion exchanger (TC 2.A.31) family.

It is found in the apical cell membrane. Its subcellular location is the basolateral cell membrane. The catalysed reaction is hydrogencarbonate(in) + chloride(out) = hydrogencarbonate(out) + chloride(in). Functionally, sodium-independent anion exchanger which mediates the electroneutral exchange of chloride for bicarbonate ions across the cell membrane. Plays an important role in osteoclast differentiation and function. Regulates bone resorption and calpain-dependent actin cytoskeleton organization in osteoclasts via anion exchange-dependent control of pH. Essential for intracellular pH regulation in CD8(+) T-cells upon CD3 stimulation, modulating CD8(+) T-cell response. The sequence is that of Anion exchange protein 2 (SLC4A2) from Pongo abelii (Sumatran orangutan).